We begin with the raw amino-acid sequence, 519 residues long: Putative cytochrome P450 CYP13A10 (519 aa).

A helical transmembrane segment spans residues 3 to 23; the sequence is VILLAIPTLFIGFISYYLWIW. Heme is bound at residue C465.

Belongs to the cytochrome P450 family. The cofactor is heme.

Its subcellular location is the membrane. Its function is as follows. Cytochromes P450 are a group of heme-thiolate monooxygenases. They oxidize a variety of structurally unrelated compounds, including steroids, fatty acids, and xenobiotics. The sequence is that of Putative cytochrome P450 CYP13A10 (cyp-13A10) from Caenorhabditis elegans.